The primary structure comprises 178 residues: E1B protein, small T-antigen (178 aa).

The protein belongs to the adenoviridae E1B 19 kDa protein family.

Its subcellular location is the host cell membrane. The protein localises to the host nucleus envelope. The protein resides in the host nucleus lamina. Its function is as follows. Putative adenovirus Bcl-2 homolog that inhibits apoptosis induced by TNF or FAS pathways, as well as p53-mediated apoptosis. Without E1B 19K function, virus production is compromised because of premature death of host cell. Interacts with Bax protein in cell lysates. This chain is E1B protein, small T-antigen, found in Human adenovirus B serotype 7 (HAdV-7).